The chain runs to 190 residues: MDRTEQKSIIEGLLFVSGDEGISPEQIAKVLEIEGNEVINILEEMQKECEGAHRGLQIVQYAKVYRFATKKEHASYYQKLIDIPTAASLSQAALETLAIVAYRQPITRTEMEEIRGVKTDKALQTLVSHLLIKEMGRAEGPGRPILYGTTKEFLDTFGLKTLDDLPPLSEENEQMNEADLFFGSLQEISK.

This sequence belongs to the ScpB family. In terms of assembly, homodimer. Homodimerization may be required to stabilize the binding of ScpA to the Smc head domains. Component of a cohesin-like complex composed of ScpA, ScpB and the Smc homodimer, in which ScpA and ScpB bind to the head domain of Smc. The presence of the three proteins is required for the association of the complex with DNA.

The protein localises to the cytoplasm. Participates in chromosomal partition during cell division. May act via the formation of a condensin-like complex containing Smc and ScpA that pull DNA away from mid-cell into both cell halves. The protein is Segregation and condensation protein B of Bacillus cereus (strain AH187).